The chain runs to 274 residues: Energy-coupling factor transporter ATP-binding protein EcfA (274 aa).

One can recognise an ABC transporter domain in the interval 2–235; the sequence is IRLENVSYNY…LSLRYLGLTP (234 aa). 35-42 contacts ATP; the sequence is GKNGSGKS.

Belongs to the ABC transporter superfamily. Energy-coupling factor EcfA family. Forms a stable energy-coupling factor (ECF) transporter complex composed of 2 membrane-embedded substrate-binding proteins (S component), 2 ATP-binding proteins (A component) and 2 transmembrane proteins (T component).

The protein resides in the cell membrane. In terms of biological role, ATP-binding (A) component of a common energy-coupling factor (ECF) ABC-transporter complex. Unlike classic ABC transporters this ECF transporter provides the energy necessary to transport a number of different substrates. This Methanosarcina acetivorans (strain ATCC 35395 / DSM 2834 / JCM 12185 / C2A) protein is Energy-coupling factor transporter ATP-binding protein EcfA.